Here is a 207-residue protein sequence, read N- to C-terminus: Cytochrome c biogenesis ATP-binding export protein CcmA (207 aa).

In terms of domain architecture, ABC transporter spans 2–204 (LECENLSCTR…TTIDIRNFNR (203 aa)). 34–41 (GPNGSGKT) lines the ATP pocket.

Belongs to the ABC transporter superfamily. CcmA exporter (TC 3.A.1.107) family. The complex is composed of two ATP-binding proteins (CcmA) and two transmembrane proteins (CcmB).

Its subcellular location is the cell membrane. The enzyme catalyses heme b(in) + ATP + H2O = heme b(out) + ADP + phosphate + H(+). Functionally, part of the ABC transporter complex CcmAB involved in the biogenesis of c-type cytochromes; once thought to export heme, this seems not to be the case, but its exact role is uncertain. Responsible for energy coupling to the transport system. The sequence is that of Cytochrome c biogenesis ATP-binding export protein CcmA from Wolbachia pipientis wMel.